Reading from the N-terminus, the 54-residue chain is MSFITLNNFFNTNTFFGLLPEQYAPFDPLIDVLPIIPVLFFLLAFVWQASVKFR.

Positions 1–17 (MSFITLNNFFNTNTFFG) are excised as a propeptide. Residues 29-49 (LIDVLPIIPVLFFLLAFVWQA) traverse the membrane as a helical segment.

It belongs to the PsbK family. In terms of assembly, PSII is composed of 1 copy each of membrane proteins PsbA, PsbB, PsbC, PsbD, PsbE, PsbF, PsbH, PsbI, PsbJ, PsbK, PsbL, PsbM, PsbT, PsbY, PsbZ, Psb30/Ycf12, at least 3 peripheral proteins of the oxygen-evolving complex and a large number of cofactors. It forms dimeric complexes.

The protein localises to the plastid. Its subcellular location is the chloroplast thylakoid membrane. One of the components of the core complex of photosystem II (PSII). PSII is a light-driven water:plastoquinone oxidoreductase that uses light energy to abstract electrons from H(2)O, generating O(2) and a proton gradient subsequently used for ATP formation. It consists of a core antenna complex that captures photons, and an electron transfer chain that converts photonic excitation into a charge separation. The chain is Photosystem II reaction center protein K from Euglena gracilis.